Here is an 88-residue protein sequence, read N- to C-terminus: Small ribosomal subunit protein bS16 (88 aa).

The protein belongs to the bacterial ribosomal protein bS16 family.

The chain is Small ribosomal subunit protein bS16 from Halothermothrix orenii (strain H 168 / OCM 544 / DSM 9562).